The sequence spans 233 residues: 5'-methylthioadenosine/S-adenosylhomocysteine nucleosidase (233 aa).

Glu12 acts as the Proton acceptor in catalysis. Substrate-binding positions include Gly78, Ile156, and 177-178 (ME). Asp201 serves as the catalytic Proton donor.

Belongs to the PNP/UDP phosphorylase family. MtnN subfamily.

The catalysed reaction is S-adenosyl-L-homocysteine + H2O = S-(5-deoxy-D-ribos-5-yl)-L-homocysteine + adenine. The enzyme catalyses S-methyl-5'-thioadenosine + H2O = 5-(methylsulfanyl)-D-ribose + adenine. It catalyses the reaction 5'-deoxyadenosine + H2O = 5-deoxy-D-ribose + adenine. It functions in the pathway amino-acid biosynthesis; L-methionine biosynthesis via salvage pathway; S-methyl-5-thio-alpha-D-ribose 1-phosphate from S-methyl-5'-thioadenosine (hydrolase route): step 1/2. Catalyzes the irreversible cleavage of the glycosidic bond in both 5'-methylthioadenosine (MTA) and S-adenosylhomocysteine (SAH/AdoHcy) to adenine and the corresponding thioribose, 5'-methylthioribose and S-ribosylhomocysteine, respectively. Also cleaves 5'-deoxyadenosine, a toxic by-product of radical S-adenosylmethionine (SAM) enzymes, into 5-deoxyribose and adenine. This is 5'-methylthioadenosine/S-adenosylhomocysteine nucleosidase from Listeria monocytogenes serotype 4b (strain CLIP80459).